The chain runs to 284 residues: Bifunctional protein FolD (284 aa).

Residues 166–168 (GAS) and I232 contribute to the NADP(+) site.

Belongs to the tetrahydrofolate dehydrogenase/cyclohydrolase family. Homodimer.

The catalysed reaction is (6R)-5,10-methylene-5,6,7,8-tetrahydrofolate + NADP(+) = (6R)-5,10-methenyltetrahydrofolate + NADPH. The enzyme catalyses (6R)-5,10-methenyltetrahydrofolate + H2O = (6R)-10-formyltetrahydrofolate + H(+). Its pathway is one-carbon metabolism; tetrahydrofolate interconversion. In terms of biological role, catalyzes the oxidation of 5,10-methylenetetrahydrofolate to 5,10-methenyltetrahydrofolate and then the hydrolysis of 5,10-methenyltetrahydrofolate to 10-formyltetrahydrofolate. This is Bifunctional protein FolD from Azotobacter vinelandii (strain DJ / ATCC BAA-1303).